Reading from the N-terminus, the 313-residue chain is Porphobilinogen deaminase (313 aa).

Cysteine 242 carries the S-(dipyrrolylmethanemethyl)cysteine modification.

The protein belongs to the HMBS family. In terms of assembly, monomer. Dipyrromethane serves as cofactor.

It catalyses the reaction 4 porphobilinogen + H2O = hydroxymethylbilane + 4 NH4(+). It participates in porphyrin-containing compound metabolism; protoporphyrin-IX biosynthesis; coproporphyrinogen-III from 5-aminolevulinate: step 2/4. In terms of biological role, tetrapolymerization of the monopyrrole PBG into the hydroxymethylbilane pre-uroporphyrinogen in several discrete steps. The chain is Porphobilinogen deaminase from Pseudomonas putida (strain ATCC 47054 / DSM 6125 / CFBP 8728 / NCIMB 11950 / KT2440).